A 315-amino-acid polypeptide reads, in one-letter code: uncharacterized protein (315 aa).

This is an uncharacterized protein from Bos taurus (Bovine).